Consider the following 710-residue polypeptide: Polyribonucleotide nucleotidyltransferase (710 aa).

Mg(2+) is bound by residues Asp486 and Asp492. The KH domain maps to 553-612; it reads PRIHTIKISVDKIKDVIGKGGSVIRALTEETGTTIEIEDDGTVKIAATDGDKAKFAIRRI. Residues 622–690 enclose the S1 motif domain; that stretch reads GRIYNGKVTR…RQGRVRLSIK (69 aa). A disordered region spans residues 690–710; the sequence is KEAGEQAQPEAEAVPAAPEAE. Positions 694–710 are enriched in low complexity; it reads EQAQPEAEAVPAAPEAE.

Belongs to the polyribonucleotide nucleotidyltransferase family. As to quaternary structure, component of the RNA degradosome, which is a multiprotein complex involved in RNA processing and mRNA degradation. Mg(2+) serves as cofactor.

The protein resides in the cytoplasm. It catalyses the reaction RNA(n+1) + phosphate = RNA(n) + a ribonucleoside 5'-diphosphate. In terms of biological role, involved in mRNA degradation. Catalyzes the phosphorolysis of single-stranded polyribonucleotides processively in the 3'- to 5'-direction. The chain is Polyribonucleotide nucleotidyltransferase from Erwinia tasmaniensis (strain DSM 17950 / CFBP 7177 / CIP 109463 / NCPPB 4357 / Et1/99).